A 192-amino-acid chain; its full sequence is Fe/S biogenesis protein NfuA (192 aa).

[4Fe-4S] cluster is bound by residues Cys-150 and Cys-153.

It belongs to the NfuA family. As to quaternary structure, homodimer. [4Fe-4S] cluster is required as a cofactor.

Functionally, involved in iron-sulfur cluster biogenesis. Binds a 4Fe-4S cluster, can transfer this cluster to apoproteins, and thereby intervenes in the maturation of Fe/S proteins. Could also act as a scaffold/chaperone for damaged Fe/S proteins. The protein is Fe/S biogenesis protein NfuA of Vesicomyosocius okutanii subsp. Calyptogena okutanii (strain HA).